A 66-amino-acid chain; its full sequence is Large ribosomal subunit protein bL33c (66 aa).

The protein belongs to the bacterial ribosomal protein bL33 family.

It localises to the plastid. It is found in the chloroplast. The chain is Large ribosomal subunit protein bL33c from Morus indica (Mulberry).